The primary structure comprises 71 residues: Small ribosomal subunit protein bS21 (71 aa).

It belongs to the bacterial ribosomal protein bS21 family.

The protein is Small ribosomal subunit protein bS21 of Blochmanniella floridana.